The primary structure comprises 323 residues: Quinolinate synthase (323 aa).

Residues His-38 and Ser-55 each coordinate iminosuccinate. Residue Cys-100 participates in [4Fe-4S] cluster binding. Residues 126 to 128 (YIN) and Ser-143 each bind iminosuccinate. [4Fe-4S] cluster is bound at residue Cys-186. Iminosuccinate is bound by residues 212-214 (HPE) and Thr-229. Residue Cys-279 participates in [4Fe-4S] cluster binding.

Belongs to the quinolinate synthase family. Type 2 subfamily. [4Fe-4S] cluster serves as cofactor.

The protein resides in the cytoplasm. The enzyme catalyses iminosuccinate + dihydroxyacetone phosphate = quinolinate + phosphate + 2 H2O + H(+). The protein operates within cofactor biosynthesis; NAD(+) biosynthesis; quinolinate from iminoaspartate: step 1/1. In terms of biological role, catalyzes the condensation of iminoaspartate with dihydroxyacetone phosphate to form quinolinate. This Gloeothece citriformis (strain PCC 7424) (Cyanothece sp. (strain PCC 7424)) protein is Quinolinate synthase.